The primary structure comprises 271 residues: 3-methyl-2-oxobutanoate hydroxymethyltransferase (271 aa).

The Mg(2+) site is built by Asp-51 and Asp-90. Residues 51-52, Asp-90, and Lys-118 each bind 3-methyl-2-oxobutanoate; that span reads DS. Position 120 (Glu-120) interacts with Mg(2+). Glu-186 functions as the Proton acceptor in the catalytic mechanism.

It belongs to the PanB family. As to quaternary structure, homodecamer; pentamer of dimers. Requires Mg(2+) as cofactor.

The protein resides in the cytoplasm. The enzyme catalyses 3-methyl-2-oxobutanoate + (6R)-5,10-methylene-5,6,7,8-tetrahydrofolate + H2O = 2-dehydropantoate + (6S)-5,6,7,8-tetrahydrofolate. It functions in the pathway cofactor biosynthesis; (R)-pantothenate biosynthesis; (R)-pantoate from 3-methyl-2-oxobutanoate: step 1/2. In terms of biological role, catalyzes the reversible reaction in which hydroxymethyl group from 5,10-methylenetetrahydrofolate is transferred onto alpha-ketoisovalerate to form ketopantoate. The polypeptide is 3-methyl-2-oxobutanoate hydroxymethyltransferase (Xanthomonas oryzae pv. oryzae (strain PXO99A)).